A 541-amino-acid polypeptide reads, in one-letter code: 2-succinyl-5-enolpyruvyl-6-hydroxy-3-cyclohexene-1-carboxylate synthase (541 aa).

The protein belongs to the TPP enzyme family. MenD subfamily. In terms of assembly, homodimer. Mg(2+) serves as cofactor. It depends on Mn(2+) as a cofactor. Requires thiamine diphosphate as cofactor.

The enzyme catalyses isochorismate + 2-oxoglutarate + H(+) = 5-enolpyruvoyl-6-hydroxy-2-succinyl-cyclohex-3-ene-1-carboxylate + CO2. The protein operates within quinol/quinone metabolism; 1,4-dihydroxy-2-naphthoate biosynthesis; 1,4-dihydroxy-2-naphthoate from chorismate: step 2/7. Its pathway is quinol/quinone metabolism; menaquinone biosynthesis. Its function is as follows. Catalyzes the thiamine diphosphate-dependent decarboxylation of 2-oxoglutarate and the subsequent addition of the resulting succinic semialdehyde-thiamine pyrophosphate anion to isochorismate to yield 2-succinyl-5-enolpyruvyl-6-hydroxy-3-cyclohexene-1-carboxylate (SEPHCHC). The protein is 2-succinyl-5-enolpyruvyl-6-hydroxy-3-cyclohexene-1-carboxylate synthase of Rhodococcus opacus (strain B4).